We begin with the raw amino-acid sequence, 351 residues long: Heat shock factor protein HSF30 (351 aa).

The DNA-binding element occupies 29–123 (PPPFLSKTYE…LLKTIKRRRN (95 aa)).

The protein belongs to the HSF family. In terms of assembly, homotrimer. Post-translationally, exhibits temperature-dependent phosphorylation.

It is found in the nucleus. DNA-binding protein that specifically binds heat shock promoter elements (HSE) and activates transcription. In Solanum peruvianum (Peruvian tomato), this protein is Heat shock factor protein HSF30 (HSF30).